The following is a 234-amino-acid chain: Large ribosomal subunit protein uL1 (234 aa).

It belongs to the universal ribosomal protein uL1 family. In terms of assembly, part of the 50S ribosomal subunit.

Binds directly to 23S rRNA. The L1 stalk is quite mobile in the ribosome, and is involved in E site tRNA release. Its function is as follows. Protein L1 is also a translational repressor protein, it controls the translation of the L11 operon by binding to its mRNA. This Anaeromyxobacter dehalogenans (strain 2CP-1 / ATCC BAA-258) protein is Large ribosomal subunit protein uL1.